We begin with the raw amino-acid sequence, 347 residues long: NADH-ubiquinone oxidoreductase chain 2 (347 aa).

10 helical membrane passes run 3–23, 25–45, 59–79, 93–115, 149–169, 178–198, 200–220, 242–262, 274–294, and 323–343; these read PPIL…VLTS, HWLL…PILM, YFLT…INLL, MAST…HFWV, INTN…GWGG, ILAY…TYNP, VMIL…MLFI, SFIL…GFIP, EMII…YFYM, and MALL…TPMM.

It belongs to the complex I subunit 2 family. In terms of assembly, core subunit of respiratory chain NADH dehydrogenase (Complex I) which is composed of 45 different subunits. Interacts with TMEM242.

The protein localises to the mitochondrion inner membrane. It carries out the reaction a ubiquinone + NADH + 5 H(+)(in) = a ubiquinol + NAD(+) + 4 H(+)(out). Core subunit of the mitochondrial membrane respiratory chain NADH dehydrogenase (Complex I) which catalyzes electron transfer from NADH through the respiratory chain, using ubiquinone as an electron acceptor. Essential for the catalytic activity and assembly of complex I. In Nandinia binotata (African palm civet), this protein is NADH-ubiquinone oxidoreductase chain 2.